Consider the following 100-residue polypeptide: Small ribosomal subunit protein uS14c (100 aa).

Belongs to the universal ribosomal protein uS14 family. Part of the 30S ribosomal subunit.

The protein localises to the plastid. Its subcellular location is the chloroplast. In terms of biological role, binds 16S rRNA, required for the assembly of 30S particles. This chain is Small ribosomal subunit protein uS14c, found in Chlamydomonas reinhardtii (Chlamydomonas smithii).